Reading from the N-terminus, the 500-residue chain is Cytochrome c-552 (500 aa).

The signal sequence occupies residues 1-24 (MKFLIKSLAVATISILGCLQTALA). 10 residues coordinate heme c: His102, Cys130, Cys133, Lys134, Cys168, Cys171, His172, Cys217, Cys220, and His221. Glu223, Tyr224, Lys268, and Gln270 together coordinate Ca(2+). Tyr224 contacts substrate. His271 contacts substrate. Residues His282, Cys289, Cys292, His293, His308, Cys321, Cys324, His325, and His400 each coordinate heme c. Positions 477–500 (ARAKGLLPAEEADKPVAAPKAEAK) are disordered.

The protein belongs to the cytochrome c-552 family. Ca(2+) is required as a cofactor. It depends on heme c as a cofactor.

It localises to the periplasm. It catalyses the reaction 6 Fe(III)-[cytochrome c] + NH4(+) + 2 H2O = 6 Fe(II)-[cytochrome c] + nitrite + 8 H(+). It functions in the pathway nitrogen metabolism; nitrate reduction (assimilation). Its function is as follows. Catalyzes the reduction of nitrite to ammonia, consuming six electrons in the process. This chain is Cytochrome c-552, found in Mannheimia haemolytica (Pasteurella haemolytica).